Consider the following 85-residue polypeptide: Homeobox protein knotted-1-like 7 (85 aa).

Residues 1–21 (ELKNELKQGYKEKLVDIREEI) enclose the ELK domain. A DNA-binding region (homeobox; TALE-type) is located at residues 22-85 (MRKRRAGKLP…NQRKRNWHSN (64 aa)).

Belongs to the TALE/KNOX homeobox family. As to expression, expressed in all tissues examined. Highest expression in leaves.

Its subcellular location is the nucleus. In Zea mays (Maize), this protein is Homeobox protein knotted-1-like 7 (KNOX7).